Reading from the N-terminus, the 64-residue chain is Disintegrin CV-11-beta (64 aa).

The region spanning 1 to 64 is the Disintegrin domain; the sequence is NSAHPCCDPV…SDCPRNPWKD (64 aa). Cystine bridges form between cysteine 6-cysteine 29, cysteine 20-cysteine 26, cysteine 25-cysteine 50, and cysteine 38-cysteine 57. Residues 42–44 carry the Cell attachment site motif; sequence RGD.

Belongs to the disintegrin family. Dimeric disintegrin subfamily. As to quaternary structure, heterodimer with subunit alpha; disulfide-linked. Expressed by the venom gland.

The protein resides in the secreted. Its function is as follows. Inhibits ADP-induced human platelet aggregation. Antagonist of alpha-IIb/beta-3 (ITGA2B/ITGB3). In Cerastes vipera (Sahara sand viper), this protein is Disintegrin CV-11-beta.